The primary structure comprises 212 residues: ATP phosphoribosyltransferase (212 aa).

This sequence belongs to the ATP phosphoribosyltransferase family. Short subfamily. Heteromultimer composed of HisG and HisZ subunits.

It localises to the cytoplasm. The catalysed reaction is 1-(5-phospho-beta-D-ribosyl)-ATP + diphosphate = 5-phospho-alpha-D-ribose 1-diphosphate + ATP. It functions in the pathway amino-acid biosynthesis; L-histidine biosynthesis; L-histidine from 5-phospho-alpha-D-ribose 1-diphosphate: step 1/9. Its function is as follows. Catalyzes the condensation of ATP and 5-phosphoribose 1-diphosphate to form N'-(5'-phosphoribosyl)-ATP (PR-ATP). Has a crucial role in the pathway because the rate of histidine biosynthesis seems to be controlled primarily by regulation of HisG enzymatic activity. In Albidiferax ferrireducens (strain ATCC BAA-621 / DSM 15236 / T118) (Rhodoferax ferrireducens), this protein is ATP phosphoribosyltransferase.